The following is a 95-amino-acid chain: ESAT-6-like protein EsxA (95 aa).

It belongs to the WXG100 family. ESAT-6 subfamily. In terms of assembly, forms a tight 1:1 complex with EsxB.

The chain is ESAT-6-like protein EsxA from Corynebacterium diphtheriae (strain ATCC 700971 / NCTC 13129 / Biotype gravis).